The following is a 210-amino-acid chain: HTH-type transcriptional regulator MtrR (210 aa).

Residues 9–69 (LKTKEHLMLA…ALFQRICDDI (61 aa)) form the HTH tetR-type domain. The H-T-H motif DNA-binding region spans 32 to 51 (SLNEIAQAAGVTRGALYWHF).

As to quaternary structure, homodimer. Binds to DNA as a pair of dimers.

With respect to regulation, DNA binding is affected significantly by increasing the NaCl concentration. In terms of biological role, controls the permeability of the cell envelope to hydrophobic compounds such as antibiotics and detergents. Represses transcription of the mtrCDE-encoded efflux pump by binding within the mtrCDE promoter. Also negatively regulates the expression of farR, by binding to its promoter region, leading indirectly to the positive regulation of expression of the farAB-encoded efflux pump. This Neisseria gonorrhoeae protein is HTH-type transcriptional regulator MtrR.